Reading from the N-terminus, the 565-residue chain is Deformed epidermal autoregulatory factor 1 homolog (565 aa).

Disordered regions lie at residues 34 to 62 (GGEA…ETPR) and 162 to 190 (GLKG…KGGT). Positions 169–181 (PLTPGPQSPPTPL) are enriched in pro residues. Threonine 171 bears the Phosphothreonine mark. Phosphoserine is present on serine 176. Position 179 is a phosphothreonine (threonine 179). The region spanning 193–273 (NWDPSVYDSE…QCLIQDGILN (81 aa)) is the SAND domain. Positions 301–316 (KRRKKENELPTTPVKK) match the Nuclear localization signal motif. The segment at 403-478 (IAPFPEAALP…QLKTLFEQAK (76 aa)) is interaction with LMO4. Threonine 432 bears the Phosphothreonine mark. A Phosphoserine modification is found at serine 448. Residues cysteine 504, cysteine 507, cysteine 515, cysteine 518, cysteine 524, cysteine 528, histidine 536, and cysteine 540 each coordinate Zn(2+). Residues 504–540 (CVNCGREAMNECTGCHKVNYCSTFCQRKDWKDHQHIC) form an MYND-type zinc finger.

In terms of assembly, homodimer. Interacts with LMO4; LMO4 blocks export from nucleus. Interacts with LMO2 and CLIM2. May interact with the corepressors NCOR1 and NCRO2. Identified in a complex with XRCC5 and XRCC6. Interacts (via the SAND domain) with the DNA-PK complex subunit XRCC6; the interaction is direct and may be inhibited by DNA-binding. May be phosphorylated by DNA-PK complex in a DNA independent manner (in vitro).

The protein localises to the nucleus. Its function is as follows. Transcription factor that binds to sequence with multiple copies of 5'-TTC[CG]G-3' present in its own promoter and that of the HNRPA2B1 gene. Down-regulates transcription of these genes. Binds to the retinoic acid response element (RARE) 5'-AGGGTTCACCGAAAGTTCA-3'. Activates the proenkephalin gene independently of promoter binding, probably through protein-protein interaction. Regulates epithelial cell proliferation and side-branching in the mammary gland. Required for neural tube closure and skeletal patterning. Controls the expression of peripheral tissue antigens in pancreatic lymph nodes. Transcriptional activator of EIF4G3. May also involved in behavior. This Pan troglodytes (Chimpanzee) protein is Deformed epidermal autoregulatory factor 1 homolog (DEAF1).